The chain runs to 402 residues: Queuine tRNA-ribosyltransferase-like protein (402 aa).

It belongs to the queuine tRNA-ribosyltransferase family.

The polypeptide is Queuine tRNA-ribosyltransferase-like protein (Theileria parva (East coast fever infection agent)).